A 149-amino-acid chain; its full sequence is Oocyte-expressed protein homolog (149 aa).

The disordered stretch occupies residues 1-23; the sequence is MVDDAGTAESQRGKQTPADSLEQ. The span at 8–18 shows a compositional bias: polar residues; that stretch reads AESQRGKQTPA. Residues 49 to 110 form the KH; atypical domain; that stretch reads PLVFYLEAWL…SVQNRVKSML (62 aa).

The protein belongs to the KHDC1 family. Component of the subcortical maternal complex (SCMC), at least composed of NLRP5, KHDC3, OOEP, and TLE6. Within the complex, interacts with NLRP5, KHDC3 and TLE6. As part of the SCMC interacts with the SCMC-associated protein NLRP4F. The SCMC may facilitate translocation of its components between the nuclear and cytoplasmic compartments. Forms a scaffold complex with KHDC3/FILIA, and interacts with BLM and TRIM25 at DNA replication forks.

The protein localises to the cytoplasm. Its subcellular location is the nucleus. Component of the subcortical maternal complex (SCMC), a multiprotein complex that plays a key role in early embryonic development. The SCMC complex is a structural constituent of cytoplasmic lattices, which consist in fibrous structures found in the cytoplasm of oocytes and preimplantation embryos. They are required to store maternal proteins critical for embryonic development, such as proteins that control epigenetic reprogramming of the preimplantation embryo, and prevent their degradation or activation. As part of the OOEP-KHDC3 scaffold, recruits BLM and TRIM25 to DNA replication forks, thereby promoting the ubiquitination of BLM by TRIM25, enhancing BLM retainment at replication forks and therefore promoting stalled replication fork restart. Positively regulates the homologous recombination-mediated DNA double-strand break (DSB) repair pathway by regulating ATM activation and RAD51 recruitment to DSBs in oocytes. Thereby contributes to oocyte survival and the resumption and completion of meiosis. This chain is Oocyte-expressed protein homolog (OOEP), found in Papio anubis (Olive baboon).